The following is a 151-amino-acid chain: Ribosome maturation factor RimP (151 aa).

It belongs to the RimP family.

It localises to the cytoplasm. Required for maturation of 30S ribosomal subunits. The protein is Ribosome maturation factor RimP of Vibrio vulnificus (strain CMCP6).